The primary structure comprises 998 residues: MAMMTMIDVLERKDWENPVVSNWNRLPMHTPMDLLEKQSLNGLWNFDHFSRISDVPKNWLELTESKTEIIVPSNWQIEFKDKSDVPIYTNVTYPIPIQPPYVPEANPVGAYSRYFDITKEWLESGHVHLTFEGVGSAFHFWLNGEYGGYSEDSRLPAEFDISNLAKEGQNCLKVLVFRWSKVTYFEDQDMWRMSGIFRSVNLQWLPDNYLLDFSIKTDLDEDLDFANVKLQAYAKNIDDACLEFKLYDDEQLIGECHGFDAEIGVVNPKLWSDEIPYLYRLELTLMDRSGAVFHKETKKIGIRKIAIEKGQLKINGKALLVRGVNKHEFTPEHGYVVSEEVMIKDIKLMKEHNFNAVRCSHYPNDSRWYELCDEYGLYVMDEANIETHGMTPMNRLTNDPTYLPLMSERVTRMVMRDRNHPSIIIWSLGNESGYGSNHQALYDWCKSFDSSRPVHYEGGDDASRGATDATDIICPMYARVDSPSINAPYSLKTWMGVAGENRPLILCEYAHDMGNSLGGFGKYWQAFREIDRLQGGFIWDWVDQGLLKDGNYAYGGDFGDKPNDRQFSLNGLVFPNRQAKPALREAKYWQQYYQFELEKTPLGQVFAFTVTNEYLFRSTDNEKLCYQLINGLEVLWENELILNMPAGGSMRIDLSELPIDGTDNLFLNIQVKTIEKCNLLESDFEVAHQQFVLQEKINFTDRIDSNEEITLFEDEELLTVRSAKQKFIFNKSNGNLSRWLDEKGNEKLLHELSEQFTRAPLDNDIGVSEVEHIDPNAWLERWKGIGFYELKTLLKTMIIQATENEVIISVQTDYEAKGKIAFSTIREYHIFRNGELLLKVDFKRNIEFPEPARIGLSLQLAEKAENVTYFGLGPDENYPDRRGASLFGQWNLRITDMTTPYIFPSENGLRMETRELNYDRLKVRAMGQSFAFNLSPYSQNQLAKKGHWHLLEEEAGTWLNIDGFHMGVGGDDSWSPSVAQEYLLTKGNYHYEVSFKLT.

E431 serves as the catalytic Proton donor. Residue E508 is the Nucleophile of the active site.

The protein belongs to the glycosyl hydrolase 2 family.

The enzyme catalyses Hydrolysis of terminal non-reducing beta-D-galactose residues in beta-D-galactosides.. The chain is Beta-galactosidase (lacZ) from Lactococcus lactis subsp. lactis (strain IL1403) (Streptococcus lactis).